Reading from the N-terminus, the 197-residue chain is ATP-dependent Clp protease proteolytic subunit (197 aa).

Residue S100 is the Nucleophile of the active site. The active site involves H125.

It belongs to the peptidase S14 family. Component of the chloroplastic Clp protease core complex.

Its subcellular location is the plastid. It is found in the chloroplast stroma. The enzyme catalyses Hydrolysis of proteins to small peptides in the presence of ATP and magnesium. alpha-casein is the usual test substrate. In the absence of ATP, only oligopeptides shorter than five residues are hydrolyzed (such as succinyl-Leu-Tyr-|-NHMec, and Leu-Tyr-Leu-|-Tyr-Trp, in which cleavage of the -Tyr-|-Leu- and -Tyr-|-Trp bonds also occurs).. Functionally, cleaves peptides in various proteins in a process that requires ATP hydrolysis. Has a chymotrypsin-like activity. Plays a major role in the degradation of misfolded proteins. The sequence is that of ATP-dependent Clp protease proteolytic subunit from Angiopteris evecta (Mule's foot fern).